The following is a 365-amino-acid chain: Phosphatidylcholine:ceramide cholinephosphotransferase 2 (365 aa).

Residues 1–14 (MDIIETAKLEEHLE) are compositionally biased toward basic and acidic residues. Residues 1–52 (MDIIETAKLEEHLENQPSDPTNTYARPAEPVEEENKNGNGKPKSLSSGLRKG) are disordered. Residues 15-24 (NQPSDPTNTY) show a composition bias toward polar residues. Transmembrane regions (helical) follow at residues 80–100 (GIAF…ITVV), 128–148 (FSVS…QWLF), 159–179 (FCFI…VTTL), and 206–226 (LISG…DFLF). Residue histidine 229 is part of the active site. Residues 248–268 (FWWYHLICWLLSAAGIICILV) form a helical membrane-spanning segment. Catalysis depends on residues histidine 272 and aspartate 276. The helical transmembrane segment at 275–295 (IDVIIAYYITTRLFWWYHSMA) threads the bilayer. At 296-365 (NEKNLKVSSQ…KIGEDNEKST (70 aa)) the chain is on the cytoplasmic side. 4 S-palmitoyl cysteine lipidation sites follow: cysteine 331, cysteine 332, cysteine 343, and cysteine 348.

The protein belongs to the sphingomyelin synthase family. In terms of processing, palmitoylated on Cys-331, Cys-332, Cys-343 and Cys-348; which plays an important role in plasma membrane localization. Brain, heart, kidney, liver, muscle and stomach. Also expressed in a number of cell lines such as carcinoma HeLa cells, hepatoma Hep-G2 cells, and colon carcinoma Caco-2 cells.

It is found in the cell membrane. The protein localises to the golgi apparatus membrane. It catalyses the reaction an N-acylsphing-4-enine + a 1,2-diacyl-sn-glycero-3-phosphocholine = a sphingomyelin + a 1,2-diacyl-sn-glycerol. The catalysed reaction is an N-acylsphinganine + a 1,2-diacyl-sn-glycero-3-phosphocholine = an N-acylsphinganine-1-phosphocholine + a 1,2-diacyl-sn-glycerol. It carries out the reaction an N-acyl-(4R)-4-hydroxysphinganine + a 1,2-diacyl-sn-glycero-3-phosphocholine = an N-acyl-(4R)-4-hydroxysphinganine-phosphocholine + a 1,2-diacyl-sn-glycerol. The enzyme catalyses an N-acylsphinganine + a 1,2-diacyl-sn-glycero-3-phosphoethanolamine = an N-acylsphinganine-1-phosphoethanolamine + a 1,2-diacyl-sn-glycerol. It catalyses the reaction an N-acyl-(4R)-4-hydroxysphinganine + a 1,2-diacyl-sn-glycero-3-phosphoethanolamine = an N-acyl-(4R)-4-hydroxysphinganine-1-phosphoethanolamine + a 1,2-diacyl-sn-glycerol. The catalysed reaction is an N-acylsphing-4-enine + a 1,2-diacyl-sn-glycero-3-phosphoethanolamine = an N-acylsphing-4-enine 1-phosphoethanolamine + a 1,2-diacyl-sn-glycerol. It carries out the reaction 1,2-dihexadecanoyl-sn-glycero-3-phosphocholine + an N-acylsphing-4-enine = 1,2-dihexadecanoyl-sn-glycerol + a sphingomyelin. The enzyme catalyses 1-(9Z-octadecenoyl)-2-acyl-sn-3-glycerol + a sphingomyelin = a 1-(9Z-octadecenoyl)-2-acyl-sn-glycero-3-phosphocholine + an N-acylsphing-4-enine. It catalyses the reaction N-hexadecanoylsphinganine + a 1,2-diacyl-sn-glycero-3-phosphocholine = N-hexadecanoyl-sphinganine-1-phosphocholine + a 1,2-diacyl-sn-glycerol. The catalysed reaction is N-hexadecanoyl-(4R)-hydroxysphinganine + a 1,2-diacyl-sn-glycero-3-phosphocholine = N-hexadecanoyl-(4R)-hydroxysphinganine-phosphocholine + a 1,2-diacyl-sn-glycerol. It carries out the reaction N-hexadecanoylsphinganine + a 1,2-diacyl-sn-glycero-3-phosphoethanolamine = N-hexadecanoyl-sphinganine-1-phosphoethanolamine + a 1,2-diacyl-sn-glycerol. The enzyme catalyses N-hexadecanoyl-(4R)-hydroxysphinganine + a 1,2-diacyl-sn-glycero-3-phosphoethanolamine = N-hexadecanoyl-(4R)-hydroxysphinganine-1-phosphoethanolamine + a 1,2-diacyl-sn-glycerol. Its pathway is sphingolipid metabolism. With respect to regulation, inhibited by bacterial PC-phospholipase C inhibitor D609. Its function is as follows. Sphingomyelin synthase that primarily contributes to sphingomyelin synthesis and homeostasis at the plasma membrane. Catalyzes the reversible transfer of phosphocholine moiety in sphingomyelin biosynthesis: in the forward reaction transfers phosphocholine head group of phosphatidylcholine (PC) on to ceramide (CER) to form ceramide phosphocholine (sphingomyelin, SM) and diacylglycerol (DAG) as by-product, and in the reverse reaction transfers phosphocholine from SM to DAG to form PC and CER. The direction of the reaction appears to depend on the levels of CER and DAG in the plasma membrane. Does not use free phosphorylcholine or CDP-choline as donors. Can also transfer phosphoethanolamine head group of phosphatidylethanolamine (PE) on to ceramide (CER) to form ceramide phosphoethanolamine (CPE). Regulates receptor-mediated signal transduction via mitogenic DAG and proapoptotic CER, as well as via SM, a structural component of membrane rafts that serve as platforms for signal transduction and protein sorting. To a lesser extent, plays a role in secretory transport via regulation of DAG pool at the Golgi apparatus and its downstream effects on PRKD1. Required for normal bone matrix mineralization. The polypeptide is Phosphatidylcholine:ceramide cholinephosphotransferase 2 (Homo sapiens (Human)).